We begin with the raw amino-acid sequence, 1404 residues long: DNA (cytosine-5)-methyltransferase 3 (1404 aa).

Basic residues predominate over residues 1 to 10 (MKTKAGKQKK). The tract at residues 1-35 (MKTKAGKQKKRSVDSDDDVSRERRPKRATSGTNFK) is disordered. Basic and acidic residues predominate over residues 11 to 22 (RSVDSDDDVSRE). K486 participates in a covalent cross-link: Glycyl lysine isopeptide (Lys-Gly) (interchain with G-Cter in ubiquitin). 2 BAH domains span residues 614-748 (RKMD…FSLP) and 788-929 (IKYS…KKLP). Positions 969–1402 (LATLDIFAGC…RKLKEALHLR (434 aa)) constitute an SAM-dependent MTase C5-type domain. The active site involves C1085.

Belongs to the class I-like SAM-binding methyltransferase superfamily. C5-methyltransferase family.

The protein localises to the nucleus. The catalysed reaction is a 2'-deoxycytidine in DNA + S-adenosyl-L-methionine = a 5-methyl-2'-deoxycytidine in DNA + S-adenosyl-L-homocysteine + H(+). Functionally, maintains chromatin CpG methylation that plays a role in genomic imprinting, regulation of embryogenesis and seed viability. Required for proper patterns of CG DNA methylation in dividing cells. Required during the endosperm development in seeds. This is DNA (cytosine-5)-methyltransferase 3 (MET3) from Arabidopsis thaliana (Mouse-ear cress).